A 274-amino-acid chain; its full sequence is Dermonecrotic toxin LcsSicTox-betaIC1 (274 aa).

H5 is a catalytic residue. Residues E25 and D27 each coordinate Mg(2+). The active-site Nucleophile is the H41. Disulfide bonds link C45–C51 and C47–C190. N66 carries an N-linked (GlcNAc...) asparagine glycan. D85 contacts Mg(2+).

Belongs to the arthropod phospholipase D family. Class II subfamily. The cofactor is Mg(2+). Expressed by the venom gland.

The protein localises to the secreted. It carries out the reaction an N-(acyl)-sphingosylphosphocholine = an N-(acyl)-sphingosyl-1,3-cyclic phosphate + choline. The enzyme catalyses an N-(acyl)-sphingosylphosphoethanolamine = an N-(acyl)-sphingosyl-1,3-cyclic phosphate + ethanolamine. The catalysed reaction is a 1-acyl-sn-glycero-3-phosphocholine = a 1-acyl-sn-glycero-2,3-cyclic phosphate + choline. It catalyses the reaction a 1-acyl-sn-glycero-3-phosphoethanolamine = a 1-acyl-sn-glycero-2,3-cyclic phosphate + ethanolamine. Its function is as follows. Dermonecrotic toxins cleave the phosphodiester linkage between the phosphate and headgroup of certain phospholipids (sphingolipid and lysolipid substrates), forming an alcohol (often choline) and a cyclic phosphate. This toxin acts on sphingomyelin (SM). It may also act on ceramide phosphoethanolamine (CPE), lysophosphatidylcholine (LPC) and lysophosphatidylethanolamine (LPE), but not on lysophosphatidylserine (LPS), and lysophosphatidylglycerol (LPG). It acts by transphosphatidylation, releasing exclusively cyclic phosphate products as second products. Induces dermonecrosis, hemolysis, increased vascular permeability, edema, inflammatory response, and platelet aggregation. The polypeptide is Dermonecrotic toxin LcsSicTox-betaIC1 (Loxosceles cf. spinulosa (strain GJB-2008) (Recluse spider)).